A 256-amino-acid polypeptide reads, in one-letter code: Glutamate racemase (256 aa).

Residues 5 to 6 (DS) and 37 to 38 (YG) contribute to the substrate site. C69 functions as the Proton donor/acceptor in the catalytic mechanism. 70–71 (NT) contacts substrate. Catalysis depends on C181, which acts as the Proton donor/acceptor. 182–183 (TH) provides a ligand contact to substrate.

Belongs to the aspartate/glutamate racemases family.

It carries out the reaction L-glutamate = D-glutamate. It participates in cell wall biogenesis; peptidoglycan biosynthesis. In terms of biological role, provides the (R)-glutamate required for cell wall biosynthesis. The chain is Glutamate racemase from Buchnera aphidicola subsp. Schizaphis graminum (strain Sg).